The following is a 399-amino-acid chain: Argininosuccinate synthase (399 aa).

9–17 (AYSGGLDTS) contacts ATP. Tyr-88 provides a ligand contact to L-citrulline. Gly-118 contacts ATP. Thr-120, Asn-124, and Asp-125 together coordinate L-aspartate. Position 124 (Asn-124) interacts with L-citrulline. Positions 128, 176, 261, and 273 each coordinate L-citrulline.

Belongs to the argininosuccinate synthase family. Type 1 subfamily. Homotetramer.

The protein resides in the cytoplasm. It catalyses the reaction L-citrulline + L-aspartate + ATP = 2-(N(omega)-L-arginino)succinate + AMP + diphosphate + H(+). Its pathway is amino-acid biosynthesis; L-arginine biosynthesis; L-arginine from L-ornithine and carbamoyl phosphate: step 2/3. The protein is Argininosuccinate synthase of Mycobacterium leprae (strain TN).